Here is a 709-residue protein sequence, read N- to C-terminus: Potassium-transporting ATPase ATP-binding subunit (709 aa).

4 helical membrane passes run 55–75 (VMLV…RDLA), 86–106 (GLVA…EAMA), 236–256 (IALN…VVTL), and 269–289 (VVVL…ALLS). The 4-aspartylphosphate intermediate role is filled by aspartate 324. ATP contacts are provided by residues aspartate 361, glutamate 365, 395-402 (FTAETRMS), and lysine 417. Residues aspartate 545 and aspartate 549 each coordinate Mg(2+). The next 3 membrane-spanning stretches (helical) occupy residues 615-635 (FAII…LNVM), 643-663 (AILS…PLAL), and 688-708 (GLVV…ALGV).

It belongs to the cation transport ATPase (P-type) (TC 3.A.3) family. Type IA subfamily. As to quaternary structure, the system is composed of three essential subunits: KdpA, KdpB and KdpC.

Its subcellular location is the cell membrane. It carries out the reaction K(+)(out) + ATP + H2O = K(+)(in) + ADP + phosphate + H(+). Functionally, part of the high-affinity ATP-driven potassium transport (or Kdp) system, which catalyzes the hydrolysis of ATP coupled with the electrogenic transport of potassium into the cytoplasm. This subunit is responsible for energy coupling to the transport system and for the release of the potassium ions to the cytoplasm. The protein is Potassium-transporting ATPase ATP-binding subunit of Mycobacterium tuberculosis (strain ATCC 25618 / H37Rv).